Reading from the N-terminus, the 488-residue chain is Protein kinase C and casein kinase substrate in neurons 2 protein (488 aa).

The region spanning 11–282 (VEVSSDSFWE…SIKAADAVED (272 aa)) is the F-BAR domain. Positions 25–274 (KRTVKRIDDG…GIYRELEQSI (250 aa)) form a coiled coil. Lys-53 is modified (N6-acetyllysine). The segment covering 163–176 (CKEEKLAVSREANS) has biased composition (basic and acidic residues). A disordered region spans residues 163 to 183 (CKEEKLAVSREANSKADPSLN). Phosphoserine is present on Ser-273. Residue Ser-315 is modified to Phosphoserine; by PKC. A disordered region spans residues 316–429 (RREKKKAADG…PFDEDTTSGT (114 aa)). The span at 329 to 364 (TGINQTGDQSGQNKPSSNLSVPSNPAQSTQLQSSYN) shows a compositional bias: polar residues. The short motif at 364 to 366 (NPF) is the NPF1 element. Ser-375 is subject to Phosphoserine; by IKKB. Over residues 386–396 (NVSSYEKTQNY) the composition is skewed to polar residues. A Phosphoserine modification is found at Ser-401. Residues 406 to 418 (NNPFSSTDANGDS) show a composition bias toward polar residues. The short motif at 407 to 409 (NPF) is the NPF2 element. The NPF3 motif lies at 419–421 (NPF). The 61-residue stretch at 428–488 (GTEVRVRALY…YPANYVEAIQ (61 aa)) folds into the SH3 domain. Ser-448 carries the post-translational modification Phosphoserine.

It belongs to the PACSIN family. As to quaternary structure, homodimer. May form heterooligomers with other PACSINs. Interacts (via NPF motifs) with EHD1 (via EH domain). Interacts with EHD3. Interacts (via the SH3 domain) with MICALL1. Interacts with RAC1. Interacts (via SH3 domain) with DNM1, SYN1, SYNJ1 and WASL. Interacts with CAV1. Interacts with TRPV4. Forms a complex with EHD4 and MICALL1; the complex controls CDH5 trafficking and coordinates angiogenesis. Post-translationally, phosphorylated by casein kinase 2 (CK2) and protein kinase C (PKC). Phosphorylation by PKC probably decreases the membrane binding and tubulation capacities of PACSIN2, thereby modulating the lifetime of caveolae. In terms of tissue distribution, widely expressed (at protein level). Isoforms 1/3 are predominantly expressed in heart and in PC-12 cells, a pheochromocytoma cell line (at protein level). Isoforms 2/4 are widely expressed with highest levels in muscle, testis and brain (at protein level).

The protein localises to the cytoplasm. Its subcellular location is the cytoskeleton. It localises to the cytoplasmic vesicle membrane. The protein resides in the cell projection. It is found in the ruffle membrane. The protein localises to the early endosome. Its subcellular location is the recycling endosome membrane. It localises to the cell membrane. The protein resides in the membrane. It is found in the caveola. The protein localises to the cell junction. Its subcellular location is the adherens junction. Functionally, regulates the morphogenesis and endocytosis of caveolae. Lipid-binding protein that is able to promote the tubulation of the phosphatidic acid-containing membranes it preferentially binds. Plays a role in intracellular vesicle-mediated transport. Involved in the endocytosis of cell-surface receptors like the EGF receptor, contributing to its internalization in the absence of EGF stimulus. Facilitates endothelial front-rear polarity during migration by recruiting EHD4 and MICALL1 to asymmetric adherens junctions between leader and follower cells. The sequence is that of Protein kinase C and casein kinase substrate in neurons 2 protein (Pacsin2) from Rattus norvegicus (Rat).